Here is a 126-residue protein sequence, read N- to C-terminus: Holo-[acyl-carrier-protein] synthase (126 aa).

Positions 9 and 58 each coordinate Mg(2+).

The protein belongs to the P-Pant transferase superfamily. AcpS family. Mg(2+) serves as cofactor.

The protein resides in the cytoplasm. The enzyme catalyses apo-[ACP] + CoA = holo-[ACP] + adenosine 3',5'-bisphosphate + H(+). Its function is as follows. Transfers the 4'-phosphopantetheine moiety from coenzyme A to a Ser of acyl-carrier-protein. The chain is Holo-[acyl-carrier-protein] synthase from Escherichia coli (strain ATCC 8739 / DSM 1576 / NBRC 3972 / NCIMB 8545 / WDCM 00012 / Crooks).